A 359-amino-acid polypeptide reads, in one-letter code: Uracil-DNA glycosylase (359 aa).

The transit peptide at 1–21 directs the protein to the mitochondrion; sequence MWCMRRLPTNSVMTVARKRKQ. Aspartate 162 serves as the catalytic Proton acceptor.

Belongs to the uracil-DNA glycosylase (UDG) superfamily. UNG family.

The protein resides in the mitochondrion. Its subcellular location is the nucleus. The enzyme catalyses Hydrolyzes single-stranded DNA or mismatched double-stranded DNA and polynucleotides, releasing free uracil.. In terms of biological role, excises uracil residues from the DNA which can arise as a result of misincorporation of dUMP residues by DNA polymerase or due to deamination of cytosine. Not involved in strand-directed mismatch repair. The sequence is that of Uracil-DNA glycosylase from Saccharomyces cerevisiae (strain ATCC 204508 / S288c) (Baker's yeast).